Consider the following 240-residue polypeptide: Probable transcriptional activator (240 aa).

The essential for the oxygen-regulated activity stretch occupies residues 17–28 (CTSCQARHGVVC). Positions 158-232 (RTAEEKVASL…FRHIIVPDMD (75 aa)) constitute an HTH crp-type domain. The H-T-H motif DNA-binding region spans 191 to 210 (RAEIADFLGLTIETVSRQMT).

Its function is as follows. Promotes the microaerobic and symbiotic induction of fixN, possibly by binding to the FNR consensus binding site upstream of fixN. This chain is Probable transcriptional activator (fnrN), found in Rhizobium leguminosarum bv. viciae.